Reading from the N-terminus, the 1461-residue chain is MGDAADPREMRRTFIVPAIKPFDHYDFSRAKIACNLAWLVAKAFGTENVPEELGDPFYTDQYDQEHIKPPVVNLLLSAELYCRAGSLILKSDAAKPLLGHDAVIQALAQKGLYVTDQEKLVTERDLHKKPIQMSAHLAMIDTLMMAYTVEMISIEKVIACAQQYSAFFQATDLPYDIEDAVMYWMNKVNEHLKDIMEQEQKSKEHHPAEAPGGQKARYRKEQTLLKQLPCIPLVENLLKDGTDGCALAALIHFYCPAVVRLEDICLKETMSLADSLYNLQLIQEFCQEYLNHCCHFSLEDMLYAASSIKSNYLVFMAELFWWFEVVKPSFVQPRVVRPQGAEPAKDVPSVPVLNAAKRNIRDSSSSSDFSSRYTRPQTHSSASGGIRRSSSMSYVDGFIGTWPKEKRTSVHGVSFDISFDKEDSAQSSTPNRGIIRSVSNEGLTLNNSRASKHIRKNLSFKPVNGEEEESIEEELHVDPHGDLQSPMPLNTNELNSNESTHYKLPNGALQNRVLLDEFGNQIETPSIEEALQIIHDTERPPHTPRPDQIANGFFLHGQDLSILNSNIKLNQSSPDNLTDTKGALSPITDTTEVDTGIHVPSEDIPETMDEDSSLRDYTVSLDSDMDDASKLLQDYDLRASNPREALSPCPSTISTKSQPGSSASSSSGVKMTSFAEQKFRKLNHTDGKSSGSSSQKTTPEGSELNIPHVVSWAQIPEEAGVAPGRDTTQLLASEMVHLRMRLEEKRRAIEAQKKKMEAAFTKQRQKMGRTAFLTVVKKKGEGISPLREEAAGAEDEKVYTDRAKERESQKMDGQRSKSLADIKESMETPPGRWLKSPTTPVDPERQWNLTSPSEETLNEGEILEYTKSIEKLNSSLHFLQQEMQRLSLQQEMLMQMREQQAWVISPPQPSPQKQIRDFKPRQAGLSSAAAPFSSDSPRPTHPSPQSSTRKSASFSVKNQRTPRPNELKITPLNRTLTPPRSVDSLPRLRRFSPSQVPIQTRSFVCFGDDGEPQKEPKQKEEIKKEPSECKGTLGPCDHNPGEKEIKPVESTVSEVLSQPITETVCVTPNEDQLSQPTEPPPKPVFPPTAPKNVNLIEVSLSDLKPPEKADVSVEKLDGESDKEQFDDDQKVCCGFFFKDDQKAENDMAMKRAALLEKRLRREKETQLRKQQLEAEMEHKKEETRRKTEEERQKKEDERARREFIRQEYMRRKQLKLMEDMDTVIKPRPQAAKQKKQRPKSIHRDHIESPKTPIKGPPVSSLSLASLNTGDSESVHSGKRTPRSESVEGFLSPSRCGSRNGEKDWENASTTSSVASGTEYTGPKLYKEPSAKSNKHIIQNALAHCCLAGKVNEGQKKKILEEMEKSDANNFLILFRDSGCQFRSLYTYCPETEEINKLTGIGPKSITKKMIEGLYKYNSDRKQFSHIPAKTLSASVDAITIHSHLWQTKRPVTPKKLLPTKA.

One can recognise a Calponin-homology (CH) domain in the interval Pro-211 to Glu-324. The interval Arg-361–Ser-389 is disordered. Low complexity-rich tracts occupy residues Asp-362–Ser-371 and Ser-380–Ser-389. Residues Ser-391 and Ser-393 each carry the phosphoserine modification. A Phosphothreonine modification is found at Thr-401. Phosphoserine occurs at positions 439, 572, 573, 585, and 647. Disordered stretches follow at residues Ser-573–Ser-613 and Ala-639–Leu-704. Thr-652 bears the Phosphothreonine mark. A Phosphoserine modification is found at Ser-654. Over residues Ser-654 to Ser-673 the composition is skewed to low complexity. A compositionally biased stretch (basic and acidic residues) spans Gln-677–Gly-687. Residues Leu-730–Met-767 are a coiled coil. Over residues Arg-787 to Met-826 the composition is skewed to basic and acidic residues. The disordered stretch occupies residues Arg-787–Glu-855. The residue at position 836 (Ser-836) is a Phosphoserine. Residues Glu-861–Gln-900 adopt a coiled-coil conformation. The interval Met-896 to Gly-1007 is MBD region. Phosphoserine occurs at positions 905 and 910. Disordered regions lie at residues Arg-921–Ser-992, Val-1004–Glu-1044, Asn-1069–Pro-1090, Asp-1102–Gln-1124, and Lys-1163–Gly-1321. Residues Ser-926–Pro-937 show a composition bias toward low complexity. The segment covering Ser-943–Pro-962 has biased composition (polar residues). Thr-970, Thr-975, and Thr-977 each carry phosphothreonine. Phosphoserine occurs at positions 981 and 992. Positions Glu-1011 to Glu-1028 are enriched in basic and acidic residues. Residues Thr-1077–Ala-1089 show a composition bias toward pro residues. 2 stretches are compositionally biased toward basic and acidic residues: residues Lys-1104–Gln-1124 and Lys-1163–Ile-1224. Ser-1120 bears the Phosphoserine mark. Positions Lys-1138–Arg-1210 form a coiled coil. Polar residues predominate over residues Ser-1259 to Ser-1271. A phosphoserine mark is found at Ser-1285, Ser-1291, and Ser-1293. Polar residues predominate over residues Asn-1306–Glu-1318. The 135-residue stretch at Gly-1321–Lys-1455 folds into the CKK domain.

This sequence belongs to the CAMSAP1 family. In terms of assembly, interacts with CAMSAP3. Interacts with KATNA1 and KATNB1; leading to regulate the length of CAMSAP2-decorated microtubule stretches. Interacts with a complex formed by AKAP9 and PDE4DIP isoform 2/MMG8/SMYLE, which recruits CAMSAP2 to the Golgi. Interacts with MAPRE1/EB1.

It is found in the cytoplasm. The protein resides in the cytoskeleton. It localises to the golgi apparatus. The protein localises to the cilium basal body. Key microtubule-organizing protein that specifically binds the minus-end of non-centrosomal microtubules and regulates their dynamics and organization. Specifically recognizes growing microtubule minus-ends and autonomously decorates and stabilizes microtubule lattice formed by microtubule minus-end polymerization. Acts on free microtubule minus-ends that are not capped by microtubule-nucleating proteins or other factors and protects microtubule minus-ends from depolymerization. In addition, it also reduces the velocity of microtubule polymerization. Through the microtubule cytoskeleton, also regulates the organization of cellular organelles including the Golgi and the early endosomes. Essential for the tethering, but not for nucleation of non-centrosomal microtubules at the Golgi: together with Golgi-associated proteins AKAP9 and PDE4DIP, required to tether non-centrosomal minus-end microtubules to the Golgi, an important step for polarized cell movement. Also acts as a regulator of neuronal polarity and development: localizes to non-centrosomal microtubule minus-ends in neurons and stabilizes non-centrosomal microtubules, which is required for neuronal polarity, axon specification and dendritic branch formation. Through the microtubule cytoskeleton, regulates the autophagosome transport. The protein is Calmodulin-regulated spectrin-associated protein 2 of Mus musculus (Mouse).